The sequence spans 1154 residues: Spike glycoprotein (1154 aa).

The signal sequence occupies residues 1 to 18; that stretch reads MLERSLLLATLLSALCSA. Over 19 to 1096 the chain is Extracellular; that stretch reads NLFGNNSYVY…LKTYIKWPWY (1078 aa). Residues Asn-23, Asn-74, Asn-102, Asn-139, Asn-145, Asn-164, Asn-179, Asn-213, Asn-238, Asn-248, Asn-265, Asn-272, Asn-277, Asn-307, Asn-426, Asn-448, Asn-514, Asn-531, Asn-543, Asn-580, Asn-592, Asn-670, and Asn-677 are each glycosylated (N-linked (GlcNAc...) asparagine; by host). Residues 770 to 875 are heptad repeat 1 (HR1); sequence IPFATQLQAR…QVDRIITGRL (106 aa). Residues 823 to 867 adopt a coiled-coil conformation; that stretch reads QDVVNKQSSILTETMASLNKNFGAISSVLQDIYQQLDSIQADAQV. Asn-948, Asn-961, Asn-980, Asn-1015, Asn-1039, Asn-1052, and Asn-1075 each carry an N-linked (GlcNAc...) asparagine; by host glycan. The tract at residues 1025–1106 is heptad repeat 2 (HR2); sequence NDDFDFDDEL…VWLAIAFATI (82 aa). A coiled-coil region spans residues 1056 to 1084; the sequence is PILDIGSEIDRIQGVIQGLNDSLIDLETL. The helical transmembrane segment at 1097–1117 threads the bilayer; that stretch reads VWLAIAFATIIFILILGWLFF. The Cytoplasmic portion of the chain corresponds to 1118 to 1154; sequence MTGCCGCCCGCFGIIPLMSKCGKKSSYYTTFDNDVVT.

This sequence belongs to the gammacoronaviruses spike protein family. Homotrimer; each monomer consists of a S1 and a S2 subunit. The resulting peplomers protrude from the virus surface as spikes. In terms of processing, specific enzymatic cleavages in vivo yield mature proteins. The precursor is processed into S1 and S2 by host cell furin or furin-like protease to yield the mature S1 and S2 proteins. The cleavage site between S1 and S2 requires the optimal sequence [KR]-X-[KR]-R. Additionally, a second cleavage leads to the release of a fusion peptide after viral attachment to host cell receptor.

It is found in the virion membrane. Its subcellular location is the host endoplasmic reticulum-Golgi intermediate compartment membrane. In terms of biological role, attaches the virion to the host cell membrane by interacting with sialic acids, initiating the infection. Functionally, mediates fusion of the virion and cellular membranes by acting as a class I viral fusion protein. Under the current model, the protein has at least 3 conformational states: pre-fusion native state, pre-hairpin intermediate state, and post-fusion hairpin state. During viral and target cell membrane fusion, the coiled coil regions (heptad repeats) assume a trimer-of-hairpins structure, positioning the fusion peptide in close proximity to the C-terminal region of the ectodomain. The formation of this structure appears to drive apposition and subsequent fusion of viral and target cell membranes. Its function is as follows. Acts as a viral fusion peptide after S2 cleavage occurring upon virus endocytosis. This chain is Spike glycoprotein, found in Gallus gallus (Chicken).